Reading from the N-terminus, the 1241-residue chain is Putative urea carboxylase (1241 aa).

One can recognise a Biotin carboxylation domain in the interval 3–459; that stretch reads ALKTLLIANR…LTKFLNNFEY (457 aa). Residues Lys117 and Glu201 each coordinate ATP. The ATP-grasp domain occupies 121 to 321; it reads RELATKAGVP…LVELMLRQAD (201 aa). The Biotinyl-binding domain occupies 1159–1239; sequence EELLKDPEIT…EAGKPLMLVR (81 aa). Lys1202 carries the N6-biotinyllysine modification.

Biotin is required as a cofactor.

The catalysed reaction is urea + hydrogencarbonate + ATP = urea-1-carboxylate + ADP + phosphate + H(+). Involved in the utilization of lactams. Required for the conversion of exogenous 2-pyrrolidinone (gamma-butyrolactam) to endogenous gamma-amino-n-butyrate (GABA). The polypeptide is Putative urea carboxylase (lamA) (Emericella nidulans (strain FGSC A4 / ATCC 38163 / CBS 112.46 / NRRL 194 / M139) (Aspergillus nidulans)).